The following is a 379-amino-acid chain: Putative 2-hydroxyacid dehydrogenase YGL185C (379 aa).

Residues 207–208 (SI), 291–293 (LGR), and Asp317 each bind NAD(+). Arg293 is a catalytic residue. Glu322 is an active-site residue. His341 (proton donor) is an active-site residue. An NAD(+)-binding site is contributed by 341–344 (HLGS).

The protein belongs to the D-isomer specific 2-hydroxyacid dehydrogenase family.

The sequence is that of Putative 2-hydroxyacid dehydrogenase YGL185C from Saccharomyces cerevisiae (strain ATCC 204508 / S288c) (Baker's yeast).